The sequence spans 81 residues: Acyl carrier protein (81 aa).

The 76-residue stretch at 2–77 (ASIEERVVDI…EAIDFIEKEK (76 aa)) folds into the Carrier domain. Position 37 is an O-(pantetheine 4'-phosphoryl)serine (Ser-37).

Belongs to the acyl carrier protein (ACP) family. 4'-phosphopantetheine is transferred from CoA to a specific serine of apo-ACP by AcpS. This modification is essential for activity because fatty acids are bound in thioester linkage to the sulfhydryl of the prosthetic group.

The protein localises to the cytoplasm. Its pathway is lipid metabolism; fatty acid biosynthesis. In terms of biological role, carrier of the growing fatty acid chain in fatty acid biosynthesis. The chain is Acyl carrier protein from Rhodopirellula baltica (strain DSM 10527 / NCIMB 13988 / SH1).